The primary structure comprises 101 residues: Small ribosomal subunit protein uS10 (101 aa).

The protein belongs to the universal ribosomal protein uS10 family. Part of the 30S ribosomal subunit.

Functionally, involved in the binding of tRNA to the ribosomes. The sequence is that of Small ribosomal subunit protein uS10 from Christiangramia forsetii (strain DSM 17595 / CGMCC 1.15422 / KT0803) (Gramella forsetii).